Here is a 96-residue protein sequence, read N- to C-terminus: Co-chaperonin GroES (96 aa).

The protein belongs to the GroES chaperonin family. In terms of assembly, heptamer of 7 subunits arranged in a ring. Interacts with the chaperonin GroEL.

The protein resides in the cytoplasm. Together with the chaperonin GroEL, plays an essential role in assisting protein folding. The GroEL-GroES system forms a nano-cage that allows encapsulation of the non-native substrate proteins and provides a physical environment optimized to promote and accelerate protein folding. GroES binds to the apical surface of the GroEL ring, thereby capping the opening of the GroEL channel. The polypeptide is Co-chaperonin GroES (Thioalkalivibrio sulfidiphilus (strain HL-EbGR7)).